The sequence spans 175 residues: Ribulose bisphosphate carboxylase small subunit, chloroplastic (175 aa).

The transit peptide at 1–34 (MSFATTNKTIVPCATTKQIVRPRFLSNGTISKSR) directs the protein to the chloroplast.

It belongs to the RuBisCO small chain family. In terms of assembly, heterohexadecamer of 8 large and 8 small subunits.

The protein resides in the plastid. It is found in the chloroplast. Its function is as follows. RuBisCO catalyzes two reactions: the carboxylation of D-ribulose 1,5-bisphosphate, the primary event in carbon dioxide fixation, as well as the oxidative fragmentation of the pentose substrate. Both reactions occur simultaneously and in competition at the same active site. Although the small subunit is not catalytic it is essential for maximal activity. In Batophora oerstedii (Green alga), this protein is Ribulose bisphosphate carboxylase small subunit, chloroplastic.